A 481-amino-acid chain; its full sequence is Betaine aldehyde dehydrogenase 2 (481 aa).

Positions 29 and 96 each coordinate K(+). 152–154 (GAW) contributes to the NAD(+) binding site. K164 acts as the Charge relay system in catalysis. 178–181 (KPSE) is a binding site for NAD(+). V182 is a K(+) binding site. 231–234 (SVKT) lines the NAD(+) pocket. A K(+)-binding site is contributed by I246. Residue E252 is the Proton acceptor of the active site. NAD(+) contacts are provided by G254, C286, and E383. C286 serves as the catalytic Nucleophile. C286 carries the cysteine sulfenic acid (-SOH) modification. The K(+) site is built by K453 and G456. The active-site Charge relay system is the E460.

This sequence belongs to the aldehyde dehydrogenase family. Dimer of dimers. K(+) serves as cofactor.

It carries out the reaction betaine aldehyde + NAD(+) + H2O = glycine betaine + NADH + 2 H(+). It participates in amine and polyamine biosynthesis; betaine biosynthesis via choline pathway; betaine from betaine aldehyde: step 1/1. Functionally, involved in the biosynthesis of the osmoprotectant glycine betaine. Catalyzes the irreversible oxidation of betaine aldehyde to the corresponding acid. The protein is Betaine aldehyde dehydrogenase 2 of Rhizobium meliloti (strain 1021) (Ensifer meliloti).